A 426-amino-acid polypeptide reads, in one-letter code: Dihydropyrimidine dehydrogenase (NADP(+)), chloroplastic (426 aa).

The transit peptide at 1–44 (MASMSFALNRFSGLSSKTTLSADFDPSSRRSFLPPTRVGLKISS) directs the protein to the chloroplast. A45 carries the post-translational modification N-acetylalanine. Substrate-binding positions include N129 and 188–190 (NFS). The active-site Nucleophile is the C191. 256-257 (NT) contributes to the substrate binding site. The disordered stretch occupies residues 395–414 (VEQRKAEKRGLKSDKDWTGD).

Belongs to the dihydropyrimidine dehydrogenase family. Expressed in roots, leaves, stems, siliques and flowers. Highly expressed ion dry seeds.

It is found in the plastid. The protein resides in the chloroplast. The catalysed reaction is 5,6-dihydrouracil + NADP(+) = uracil + NADPH + H(+). Its pathway is amino-acid biosynthesis; beta-alanine biosynthesis. Involved in pyrimidine base degradation. Catalyzes the reduction of uracil to 5,6-dihydrouracil (DHU) by using NADH as a specific cosubstrate and the reduction of thymine to 5,6-dihydrothymine (DHT). Involved in the recycling of nitrogen from nucleobases to general nitrogen metabolism. This Arabidopsis thaliana (Mouse-ear cress) protein is Dihydropyrimidine dehydrogenase (NADP(+)), chloroplastic.